The chain runs to 1938 residues: Myosin-6 (1938 aa).

Residues 32–81 (DIRTECFVPDDKEEYVKAKVVSREGGKVTAETENGKTVTIKEDQVMQQNP) form the Myosin N-terminal SH3-like domain. The Myosin motor domain occupies 85–780 (DKIEDMAMLT…LLGLLEEMRD (696 aa)). Lys-129 bears the N6,N6,N6-trimethyllysine mark. Position 178–185 (178–185 (GESGAGKT)) interacts with ATP. Thr-379 carries the post-translational modification Phosphothreonine. The residue at position 417 (Ser-417) is a Phosphoserine. Actin-binding stretches follow at residues 657 to 679 (LNKLMTNLKTTHPHFVRCIIPNE) and 759 to 773 (KFGHTKVFFKAGLLG). The 30-residue stretch at 783–812 (LSRIITRIQAQARGQLMRIEFKKIVERRDA) folds into the IQ domain. Calmodulin-binding stretches follow at residues 790–807 (IQAQARGQLMRIEFKKIV) and 816–833 (IQWNIRAFMGVKNWPWMK). A coiled-coil region spans residues 842-1938 (LKSAETEKEM…IGAKKMHDEE (1097 aa)). Phosphoserine is present on residues Ser-1090 and Ser-1139. At Tyr-1261 the chain carries Phosphotyrosine. Ser-1271 bears the Phosphoserine mark. Thr-1277 and Thr-1284 each carry phosphothreonine. Ser-1309 carries the phosphoserine modification. Residue Tyr-1310 is modified to Phosphotyrosine. Thr-1311 carries the phosphothreonine modification. Residue Ser-1512 is modified to Phosphoserine. A Phosphothreonine modification is found at Thr-1515. The interval 1909 to 1938 (EERADIAESQVNKLRAKSRDIGAKKMHDEE) is disordered. Residues 1925–1938 (KSRDIGAKKMHDEE) are compositionally biased toward basic and acidic residues.

It belongs to the TRAFAC class myosin-kinesin ATPase superfamily. Myosin family. In terms of assembly, muscle myosin is a hexameric protein that consists of 2 heavy chain subunits (MHC), 2 alkali light chain subunits (MLC) and 2 regulatory light chain subunits (MLC-2).

The protein resides in the cytoplasm. Its subcellular location is the myofibril. Its function is as follows. Muscle contraction. The chain is Myosin-6 (Myh6) from Mus musculus (Mouse).